The sequence spans 263 residues: tRNA pseudouridine synthase A (263 aa).

Catalysis depends on Asp54, which acts as the Nucleophile. Tyr113 is a binding site for substrate.

Belongs to the tRNA pseudouridine synthase TruA family. As to quaternary structure, homodimer.

It carries out the reaction uridine(38/39/40) in tRNA = pseudouridine(38/39/40) in tRNA. In terms of biological role, formation of pseudouridine at positions 38, 39 and 40 in the anticodon stem and loop of transfer RNAs. The polypeptide is tRNA pseudouridine synthase A (Lactobacillus helveticus (strain DPC 4571)).